A 1892-amino-acid chain; its full sequence is Protein TIC 214 (1892 aa).

6 helical membrane passes run Ile-18–Gly-38, Phe-64–Leu-84, Pro-87–His-107, Leu-124–Leu-144, Val-172–Ile-192, and Ile-221–Ile-241. Disordered regions lie at residues Ser-250 to Asp-300, Arg-794 to Arg-814, and Arg-1581 to Val-1609. Acidic residues predominate over residues Val-256–Thr-268. Residues Arg-1581–Asn-1602 show a composition bias toward basic and acidic residues.

Belongs to the TIC214 family. Part of the Tic complex.

The protein localises to the plastid. Its subcellular location is the chloroplast inner membrane. Involved in protein precursor import into chloroplasts. May be part of an intermediate translocation complex acting as a protein-conducting channel at the inner envelope. The polypeptide is Protein TIC 214 (Nicotiana tomentosiformis (Tobacco)).